We begin with the raw amino-acid sequence, 477 residues long: Aspartyl/glutamyl-tRNA(Asn/Gln) amidotransferase subunit B (477 aa).

This sequence belongs to the GatB/GatE family. GatB subfamily. In terms of assembly, heterotrimer of A, B and C subunits.

The enzyme catalyses L-glutamyl-tRNA(Gln) + L-glutamine + ATP + H2O = L-glutaminyl-tRNA(Gln) + L-glutamate + ADP + phosphate + H(+). It catalyses the reaction L-aspartyl-tRNA(Asn) + L-glutamine + ATP + H2O = L-asparaginyl-tRNA(Asn) + L-glutamate + ADP + phosphate + 2 H(+). Allows the formation of correctly charged Asn-tRNA(Asn) or Gln-tRNA(Gln) through the transamidation of misacylated Asp-tRNA(Asn) or Glu-tRNA(Gln) in organisms which lack either or both of asparaginyl-tRNA or glutaminyl-tRNA synthetases. The reaction takes place in the presence of glutamine and ATP through an activated phospho-Asp-tRNA(Asn) or phospho-Glu-tRNA(Gln). This Ligilactobacillus salivarius (strain UCC118) (Lactobacillus salivarius) protein is Aspartyl/glutamyl-tRNA(Asn/Gln) amidotransferase subunit B.